We begin with the raw amino-acid sequence, 722 residues long: Bifunctional UDP-N-acetylglucosamine 2-epimerase/N-acetylmannosamine kinase (722 aa).

Positions 19, 23, 113, 220, and 253 each coordinate UDP. Positions 259, 271, 280, and 281 each coordinate CMP-N-acetyl-beta-neuraminate. UDP contacts are provided by Val282, Ser301, Ser302, Glu307, and Arg321. An N-acetylmannosamine kinase region spans residues 406-722; it reads TLSALAVDLG…VLDYTTRRIH (317 aa). Asp413 contributes to the Mg(2+) binding site. Gly416 provides a ligand contact to an N-acyl-D-mannosamine 6-phosphate. Positions 417, 418, and 420 each coordinate ADP. An N-acyl-D-mannosamine 6-phosphate is bound by residues Gly476, Arg477, Thr489, Asn516, Asp517, and Gly545. An N-acyl-D-mannosamine contacts are provided by Gly476, Arg477, Thr489, Asn516, and Asp517. Asp517 is a catalytic residue. An N-acyl-D-mannosamine contacts are provided by Glu566 and His569. His569 is a binding site for an N-acyl-D-mannosamine 6-phosphate. 4 residues coordinate Zn(2+): His569, Cys579, Cys581, and Cys586. Glu588 contacts an N-acyl-D-mannosamine 6-phosphate. Glu588 is an an N-acyl-D-mannosamine binding site.

The protein in the N-terminal section; belongs to the UDP-N-acetylglucosamine 2-epimerase family. It in the C-terminal section; belongs to the ROK (NagC/XylR) family. In terms of assembly, homodimer. Homotetramer. Homohexamer. The hexameric form exhibits both enzyme activities, whereas the dimeric form only catalyzes the phosphorylation of N-acyl-D-mannosamine. In terms of processing, phosphorylated. Phosphorylation by PKC activates the UDP-N-acetylglucosamine 2-epimerase activity. In terms of tissue distribution, widely expressed. Highest expression is observed in liver.

The protein localises to the cytoplasm. It localises to the cytosol. It carries out the reaction UDP-N-acetyl-alpha-D-glucosamine + H2O = aldehydo-N-acetyl-D-mannosamine + UDP + H(+). The enzyme catalyses an N-acyl-D-mannosamine + ATP = an N-acyl-D-mannosamine 6-phosphate + ADP + H(+). Its pathway is amino-sugar metabolism; N-acetylneuraminate biosynthesis. The UDP-N-acetylglucosamine 2-epimerase activity, in contrast to the N-acetylmannosamine kinase activity, exhibits allosteric regulation by cytidine monophosphate-N-acetylneuraminic acid (CMP-Neu5Ac), the end product of neuraminic acid biosynthesis. Moreover, the activity is contingent upon the oligomeric state of the enzyme. The monomeric form is inactive, while the dimeric form selectively catalyzes the phosphorylation of N-acetylmannosamine. The hexameric form, on the other hand, demonstrates full proficiency in both enzyme activities. Furthermore, the UDP-N-acetylglucosamine 2-epimerase activity is increased by PKC-mediated phosphorylation. In terms of biological role, bifunctional enzyme that possesses both UDP-N-acetylglucosamine 2-epimerase and N-acetylmannosamine kinase activities, and serves as the initiator of the biosynthetic pathway leading to the production of N-acetylneuraminic acid (NeuAc), a critical precursor in the synthesis of sialic acids. By catalyzing this pivotal and rate-limiting step in sialic acid biosynthesis, this enzyme assumes a pivotal role in governing the regulation of cell surface sialylation. Sialic acids represent a category of negatively charged sugars that reside on the surface of cells as terminal components of glycoconjugates and mediate important functions in various cellular processes, including cell adhesion, signal transduction, and cellular recognition. The protein is Bifunctional UDP-N-acetylglucosamine 2-epimerase/N-acetylmannosamine kinase of Rattus norvegicus (Rat).